The chain runs to 88 residues: MKEGIHPDYREVLFIDVSNDFKFVTRSTIQTRETAEFEGKTYPLAKIEVSSESHPFYTGQQKIMDTAGRVEKFRNKFGSRATGKAVAK.

This sequence belongs to the bacterial ribosomal protein bL31 family. Type B subfamily. As to quaternary structure, part of the 50S ribosomal subunit.

The chain is Large ribosomal subunit protein bL31B from Paraburkholderia phytofirmans (strain DSM 17436 / LMG 22146 / PsJN) (Burkholderia phytofirmans).